The following is a 219-amino-acid chain: MNRFFGKAKPKAPPPSLTDCIGTVDSRAESIDKKISRLDAELVKYKDQIKKMREGPAKNMVKQKALRVLKQKRMYEQQRDNLAQQSFNMEQANYTIQSLKDTKTTVDAMKLGVKEMKKAYKEVKIDQIEDLQDQLEDMMEDANEIQEALGRSYGTPELDEDDLEAELDALGDELLADEDSSYLDEAASAPAIPEGVPTDTKNKDGVLVDEFGLPQIPAS.

Basic residues predominate over residues 1–10 (MNRFFGKAKP). Residues 1–21 (MNRFFGKAKPKAPPPSLTDCI) are disordered. Residues 26 to 179 (SRAESIDKKI…LGDELLADED (154 aa)) adopt a coiled-coil conformation. A Phosphoserine modification is found at Ser-86. Residues 188–219 (SAPAIPEGVPTDTKNKDGVLVDEFGLPQIPAS) are disordered.

It belongs to the SNF7 family. Probable peripherally associated component of the endosomal sorting required for transport complex III (ESCRT-III). ESCRT-III components are thought to multimerize to form a flat lattice on the perimeter membrane of the endosome. Several assembly forms of ESCRT-III may exist that interact and act sequentially. Interacts with VTA1. Interacts with CHMP2A. Interacts with VTA1; the interaction involves soluble CHMP5. Interacts with NOD2. Interacts with BROX. Post-translationally, ISGylated. Isgylation inhibits its interaction with VTA1.

The protein resides in the cytoplasm. Its subcellular location is the cytosol. It is found in the endosome membrane. The protein localises to the midbody. In terms of biological role, probable peripherally associated component of the endosomal sorting required for transport complex III (ESCRT-III) which is involved in multivesicular bodies (MVBs) formation and sorting of endosomal cargo proteins into MVBs. MVBs contain intraluminal vesicles (ILVs) that are generated by invagination and scission from the limiting membrane of the endosome and mostly are delivered to lysosomes enabling degradation of membrane proteins, such as stimulated growth factor receptors, lysosomal enzymes and lipids. The MVB pathway appears to require the sequential function of ESCRT-O, -I,-II and -III complexes. ESCRT-III proteins mostly dissociate from the invaginating membrane before the ILV is released. The ESCRT machinery also functions in topologically equivalent membrane fission events, such as the terminal stages of cytokinesis. ESCRT-III proteins are believed to mediate the necessary vesicle extrusion and/or membrane fission activities, possibly in conjunction with the AAA ATPase VPS4. The sequence is that of Charged multivesicular body protein 5 (Chmp5) from Mus musculus (Mouse).